Reading from the N-terminus, the 411-residue chain is UPF0761 membrane protein PSPA7_4558 (411 aa).

The next 6 membrane-spanning stretches (helical) occupy residues 36-56 (LFAV…IPAF), 92-112 (HLTW…LVTI), 132-152 (FLLY…GFAV), 174-194 (LLGL…YSAV), 207-229 (GGMF…VSLF), and 244-264 (IFLL…VLVC).

The protein belongs to the UPF0761 family.

Its subcellular location is the cell inner membrane. This is UPF0761 membrane protein PSPA7_4558 from Pseudomonas paraeruginosa (strain DSM 24068 / PA7) (Pseudomonas aeruginosa (strain PA7)).